We begin with the raw amino-acid sequence, 1021 residues long: Ephrin type-B receptor 6 (1021 aa).

Positions 1-31 (MATEGAAQLGNRVAGMVCSLWVLLLVSSVLA) are cleaved as a signal peptide. Residues 32–594 (LEEVLLDTTG…LSSQLPERLS (563 aa)) lie on the Extracellular side of the membrane. In terms of domain architecture, Eph LBD spans 33–237 (EEVLLDTTGE…FSYTCPAVLR (205 aa)). Positions 163–182 (SFPSSSSSSSSSSSAAWAVG) are disordered. Residues 166–176 (SSSSSSSSSSS) show a composition bias toward low complexity. 2 consecutive Fibronectin type-III domains span residues 369–486 (PPSA…TSHE) and 487–582 (VPSA…TLPQ). N-linked (GlcNAc...) asparagine glycosylation occurs at Asn-480. Residues 595–615 (LVIGSILGALAFLLLAAITVL) form a helical membrane-spanning segment. Over 616-1021 (AVVFQRKRRG…HLRQQGSVEV (406 aa)) the chain is Cytoplasmic. One can recognise a Protein kinase domain in the interval 670–919 (IKIEEVIGTG…QLVAAFDKMI (250 aa)). 676–684 (IGTGSFGEV) serves as a coordination point for ATP. The SAM domain maps to 948 to 1012 (PCLDSPQAWL…LHHIQLLQQH (65 aa)). The PDZ-binding motif lies at 1019–1021 (VEV).

Belongs to the protein kinase superfamily. Tyr protein kinase family. Ephrin receptor subfamily. As to quaternary structure, interacts with CBL and EPHB1. Interacts with FYN; this interaction takes place in a ligand-independent manner. In terms of processing, ligand-binding increases phosphorylation on tyrosine residues. Phosphorylation on tyrosine residues is mediated by transphosphorylation by the catalytically active EPHB1 in a ligand-independent manner. Tyrosine phosphorylation of the receptor may act as a switch on the functional transition from cell adhesion/attraction to de-adhesion/repulsion. As to expression, expressed in brain. Expressed in non invasive breast carcinoma cell lines (at protein level). Strong expression in brain and pancreas, and weak expression in other tissues, such as heart, placenta, lung, liver, skeletal muscle and kidney. Expressed in breast non invasive tumors but not in metastatic lesions. Isoform 3 is expressed in cell lines of glioblastomas, anaplastic astrocytomas, gliosarcomas and astrocytomas. Isoform 3 is not detected in normal tissues.

It is found in the membrane. The protein resides in the secreted. In terms of biological role, kinase-defective receptor for members of the ephrin-B family. Binds to ephrin-B1 and ephrin-B2. Modulates cell adhesion and migration by exerting both positive and negative effects upon stimulation with ephrin-B2. Inhibits JNK activation, T-cell receptor-induced IL-2 secretion and CD25 expression upon stimulation with ephrin-B2. This chain is Ephrin type-B receptor 6 (EPHB6), found in Homo sapiens (Human).